The chain runs to 186 residues: MTGQRIGYIRVSTFDQNPERQLEGVKVDRAFSDKASGKDVKRPQLEALISFARTGDTVVVHSMDRLARNLDDLRRIVQTLTQRGVHIEFVKEHLSFTGEDSPMANLMLSVMGAFAEFERALIRERQREGIALAKQRGAYRGRKKSLSSERIAELRQRVEAGEQKTKLAREFGISRETLYQYLRTDQ.

A Resolvase/invertase-type recombinase catalytic domain is found at 4 to 137 (QRIGYIRVST…EGIALAKQRG (134 aa)). Serine 12 serves as the catalytic O-(5'-phospho-DNA)-serine intermediate. Positions 164-183 (KTKLAREFGISRETLYQYLR) form a DNA-binding region, H-T-H motif.

The protein belongs to the site-specific recombinase resolvase family.

In terms of biological role, resolvase catalyzes the resolution (a site-specific recombination) of the cointegrated replicon to yield the final transposition products. The chain is Transposon Tn21 resolvase (tnpR) from Escherichia coli.